The chain runs to 258 residues: 3-deoxy-manno-octulosonate cytidylyltransferase (258 aa).

It belongs to the KdsB family.

The protein resides in the cytoplasm. It catalyses the reaction 3-deoxy-alpha-D-manno-oct-2-ulosonate + CTP = CMP-3-deoxy-beta-D-manno-octulosonate + diphosphate. It functions in the pathway nucleotide-sugar biosynthesis; CMP-3-deoxy-D-manno-octulosonate biosynthesis; CMP-3-deoxy-D-manno-octulosonate from 3-deoxy-D-manno-octulosonate and CTP: step 1/1. Its pathway is bacterial outer membrane biogenesis; lipopolysaccharide biosynthesis. Its function is as follows. Activates KDO (a required 8-carbon sugar) for incorporation into bacterial lipopolysaccharide in Gram-negative bacteria. This is 3-deoxy-manno-octulosonate cytidylyltransferase from Nitrobacter hamburgensis (strain DSM 10229 / NCIMB 13809 / X14).